The sequence spans 164 residues: C-phycoerythrin class 1 subunit alpha (164 aa).

(2R,3E)-phycoerythrobilin is bound by residues C82 and C139.

The protein belongs to the phycobiliprotein family. Heterodimer of an alpha and a beta chain. Post-translationally, contains one covalently linked bilin chromophore.

It is found in the cellular thylakoid membrane. Its function is as follows. Light-harvesting photosynthetic bile pigment-protein from the phycobiliprotein complex. This is C-phycoerythrin class 1 subunit alpha (cpeA) from Synechococcus sp. (strain WH7803).